The following is a 477-amino-acid chain: UTP--glucose-1-phosphate uridylyltransferase (477 aa).

Position 2 is an N-acetylalanine (alanine 2). Residues 92 to 95, lysine 106, glutamine 169, and glycine 198 contribute to the UTP site; that span reads LNGG. 94-95 contacts substrate; it reads GG. Substrate contacts are provided by residues histidine 199 and 227-229; that span reads NSD. UTP contacts are provided by aspartate 229 and lysine 367.

This sequence belongs to the UDPGP type 1 family. As to quaternary structure, monomer. The cofactor is Mg(2+).

The protein localises to the cytoplasm. It carries out the reaction alpha-D-glucose 1-phosphate + UTP + H(+) = UDP-alpha-D-glucose + diphosphate. Inhibition by uncomplexed, free UTP. Functionally, plays a central role as a glucosyl donor in cellular metabolic pathways. This is UTP--glucose-1-phosphate uridylyltransferase from Solanum tuberosum (Potato).